The following is a 778-amino-acid chain: Lon protease (778 aa).

A Lon N-terminal domain is found at 8-202 (LPLIPLRGLI…NVLTVIKDEL (195 aa)). 354-361 (GPPGVGKT) contributes to the ATP binding site. Residues 591–772 (EDKIGVVTGM…DTVLENALIG (182 aa)) form the Lon proteolytic domain. Residues Ser678 and Lys721 contribute to the active site.

Belongs to the peptidase S16 family. In terms of assembly, homohexamer. Organized in a ring with a central cavity.

It localises to the cytoplasm. The enzyme catalyses Hydrolysis of proteins in presence of ATP.. Its function is as follows. ATP-dependent serine protease that mediates the selective degradation of mutant and abnormal proteins as well as certain short-lived regulatory proteins. Required for cellular homeostasis and for survival from DNA damage and developmental changes induced by stress. Degrades polypeptides processively to yield small peptide fragments that are 5 to 10 amino acids long. Binds to DNA in a double-stranded, site-specific manner. This is Lon protease from Clostridium acetobutylicum (strain ATCC 824 / DSM 792 / JCM 1419 / IAM 19013 / LMG 5710 / NBRC 13948 / NRRL B-527 / VKM B-1787 / 2291 / W).